Consider the following 2358-residue polypeptide: Cell wall alpha-1,3-glucan synthase mok13 (2358 aa).

A compositionally biased stretch (basic and acidic residues) spans 1645–1659; the sequence is EGLENEENELKDKAP. A disordered region spans residues 1645–1669; it reads EGLENEENELKDKAPPNEPNVGSLF.

Belongs to the glycosyltransferase group 1 family.

The catalysed reaction is [(1-&gt;3)-alpha-D-glucosyl](n) + UDP-alpha-D-glucose = [(1-&gt;3)-alpha-D-glucosyl](n+1) + UDP + H(+). The chain is Cell wall alpha-1,3-glucan synthase mok13 (mok13) from Schizosaccharomyces pombe (strain 972 / ATCC 24843) (Fission yeast).